A 227-amino-acid chain; its full sequence is MASSMAPAAAMAILLLALLMPATLCSRSGPPSSKHGHGGHAKRAPPPASPVVPVAPQAAALVRATCNSTAYYDVCVSALAADPSSTTADVRGLSAIAVSVAAANASGAAQAAAALANGTAPLAAAAAGDGTVQALLRACAGKYGDARDALAAAKESMGQQDYDLATVHVSAGAEYPQVCKALFRRQRPGAYPAELAAREEALNKLCSVALDIIALLTSSPASNNNNS.

The N-terminal stretch at 1–25 is a signal peptide; it reads MASSMAPAAAMAILLLALLMPATLC. Residues 28–50 are disordered; sequence SGPPSSKHGHGGHAKRAPPPASP. Basic residues predominate over residues 34 to 43; sequence KHGHGGHAKR. Cys-66 and Cys-75 are oxidised to a cystine. N-linked (GlcNAc...) asparagine glycans are attached at residues Asn-67, Asn-104, and Asn-117. Cysteines 139 and 179 form a disulfide.

It belongs to the PMEI family. Expressed in roots, leaves, culms and flag leaves.

Its subcellular location is the secreted. It is found in the extracellular space. The protein localises to the apoplast. In terms of biological role, pectin methylesterase (PME) inhibitor that inhibits PME in vitro. Functions as a critical structural modulator by regulating the degree of pectin methylesterification and the physiochemical properties of the cell wall components. The polypeptide is Pectinesterase inhibitor 28 (Oryza sativa subsp. japonica (Rice)).